Here is a 299-residue protein sequence, read N- to C-terminus: Probable alpha-L-glutamate ligase (299 aa).

The ATP-grasp domain maps to 104-287 (LQLLAREGIE…VSGKIIEFLE (184 aa)). Residues Lys-141, 178-179 (EF), Asp-187, and 211-213 (RSN) contribute to the ATP site. 3 residues coordinate Mg(2+): Asp-248, Glu-260, and Asn-262. Residues Asp-248, Glu-260, and Asn-262 each contribute to the Mn(2+) site.

It belongs to the RimK family. Mg(2+) serves as cofactor. Mn(2+) is required as a cofactor.

This chain is Probable alpha-L-glutamate ligase, found in Trichodesmium erythraeum (strain IMS101).